Consider the following 186-residue polypeptide: ATP synthase subunit b, chloroplastic (186 aa).

A helical membrane pass occupies residues 27 to 49; the sequence is LATNPINLSVVLGVLIFFGKGVL.

Belongs to the ATPase B chain family. As to quaternary structure, F-type ATPases have 2 components, F(1) - the catalytic core - and F(0) - the membrane proton channel. F(1) has five subunits: alpha(3), beta(3), gamma(1), delta(1), epsilon(1). F(0) has four main subunits: a(1), b(1), b'(1) and c(10-14). The alpha and beta chains form an alternating ring which encloses part of the gamma chain. F(1) is attached to F(0) by a central stalk formed by the gamma and epsilon chains, while a peripheral stalk is formed by the delta, b and b' chains.

Its subcellular location is the plastid. The protein resides in the chloroplast thylakoid membrane. In terms of biological role, f(1)F(0) ATP synthase produces ATP from ADP in the presence of a proton or sodium gradient. F-type ATPases consist of two structural domains, F(1) containing the extramembraneous catalytic core and F(0) containing the membrane proton channel, linked together by a central stalk and a peripheral stalk. During catalysis, ATP synthesis in the catalytic domain of F(1) is coupled via a rotary mechanism of the central stalk subunits to proton translocation. Functionally, component of the F(0) channel, it forms part of the peripheral stalk, linking F(1) to F(0). This Illicium oligandrum (Star anise) protein is ATP synthase subunit b, chloroplastic.